A 115-amino-acid chain; its full sequence is NADH-ubiquinone oxidoreductase chain 3 (115 aa).

A run of 3 helical transmembrane segments spans residues 3–23, 55–75, and 84–104; these read LFVA…VAFW, FFLV…LLPL, and LSAM…GLIY.

The protein belongs to the complex I subunit 3 family. In terms of assembly, core subunit of respiratory chain NADH dehydrogenase (Complex I) which is composed of 45 different subunits. Interacts with TMEM186. Interacts with TMEM242.

It localises to the mitochondrion inner membrane. It catalyses the reaction a ubiquinone + NADH + 5 H(+)(in) = a ubiquinol + NAD(+) + 4 H(+)(out). Its function is as follows. Core subunit of the mitochondrial membrane respiratory chain NADH dehydrogenase (Complex I) which catalyzes electron transfer from NADH through the respiratory chain, using ubiquinone as an electron acceptor. Essential for the catalytic activity of complex I. The protein is NADH-ubiquinone oxidoreductase chain 3 of Sigmodon hispidus (Hispid cotton rat).